Here is a 575-residue protein sequence, read N- to C-terminus: Transmembrane protein 108 (575 aa).

Residues 9-29 (YCQLLSFLLILALTEALAFAI) traverse the membrane as a helical segment. The interaction with SH3GL2 stretch occupies residues 31 to 169 (EPSPRESLQV…TTTRRPPRPP (139 aa)). The disordered stretch occupies residues 65 to 398 (MLTPNPDGPP…PSRVSESTIS (334 aa)). Positions 74–87 (PSQAAAPMATPTPR) are enriched in low complexity. Polar residues predominate over residues 95–115 (HTISTIAATVTAPHSESSLST). The span at 146–160 (PPGATSRPTTAPPRT) shows a compositional bias: low complexity. The segment at 173-407 (RKGAGNSSRP…SGAKEETVAT (235 aa)) is interaction with DST (isoform 1). Positions 244 to 271 (YSSSPQPQTVAATTVPSNTSWAPTTTSL) are enriched in polar residues. The segment covering 290–318 (TFTSQGGTPDATAASGAPVSPQAAPVPSQ) has biased composition (low complexity). Residues 329-352 (PSHSDSWLTVTPGTSRPLSTSSGV) show a composition bias toward polar residues. Residues 353–366 (FTAATGPTPAAFDT) are compositionally biased toward low complexity. A compositionally biased stretch (polar residues) spans 367–398 (SVSAPSQGIPQGASTTPQAPTHPSRVSESTIS). A helical membrane pass occupies residues 469-489 (IAWVILAISVPISSCSVLLTV). The interaction with CYFIP2 stretch occupies residues 490 to 575 (CCMKRKKKTA…FVGNDQVSEI (86 aa)).

Interacts with DST (isoform 1). Interacts with SH3GL2. Interacts (via N-terminus) with CYFIP1 and CYFIP2; the interactions associate TMEM108 with the WAVE1 complex. Glycosylated.

It localises to the membrane. It is found in the postsynaptic density. The protein localises to the endosome membrane. Its subcellular location is the cell projection. The protein resides in the axon. It localises to the dendrite. It is found in the early endosome. In terms of biological role, transmembrane protein required for proper cognitive functions. Involved in the development of dentate gyrus (DG) neuron circuitry, is necessary for AMPA receptors surface expression and proper excitatory postsynaptic currents of DG granule neurons. Regulates the organization and stability of the microtubule network of sensory neurons to allow axonal transport. Through the interaction with DST, mediates the docking of the dynein/dynactin motor complex to vesicle cargos for retrograde axonal transport. In hippocampal neurons, required for BDNF-dependent dendrite outgrowth. Cooperates with SH3GL2 and recruits the WAVE1 complex to facilitate actin-dependent BDNF:NTRK2 early endocytic trafficking and mediate signaling from early endosomes. The polypeptide is Transmembrane protein 108 (Homo sapiens (Human)).